The sequence spans 221 residues: 2-C-methyl-D-erythritol 4-phosphate cytidylyltransferase (221 aa).

This sequence belongs to the IspD/TarI cytidylyltransferase family. IspD subfamily.

It carries out the reaction 2-C-methyl-D-erythritol 4-phosphate + CTP + H(+) = 4-CDP-2-C-methyl-D-erythritol + diphosphate. The protein operates within isoprenoid biosynthesis; isopentenyl diphosphate biosynthesis via DXP pathway; isopentenyl diphosphate from 1-deoxy-D-xylulose 5-phosphate: step 2/6. In terms of biological role, catalyzes the formation of 4-diphosphocytidyl-2-C-methyl-D-erythritol from CTP and 2-C-methyl-D-erythritol 4-phosphate (MEP). This chain is 2-C-methyl-D-erythritol 4-phosphate cytidylyltransferase, found in Roseobacter denitrificans (strain ATCC 33942 / OCh 114) (Erythrobacter sp. (strain OCh 114)).